A 371-amino-acid chain; its full sequence is Queuine tRNA-ribosyltransferase (371 aa).

Residue Asp89 is the Proton acceptor of the active site. Substrate contacts are provided by residues 89 to 93 (DSGGF), Asp143, Gln185, and Gly212. An RNA binding region spans residues 243–249 (GVGTPED). The active-site Nucleophile is the Asp262. An RNA binding; important for wobble base 34 recognition region spans residues 267–271 (TRNAR). 4 residues coordinate Zn(2+): Cys300, Cys302, Cys305, and His331.

The protein belongs to the queuine tRNA-ribosyltransferase family. As to quaternary structure, homodimer. Within each dimer, one monomer is responsible for RNA recognition and catalysis, while the other monomer binds to the replacement base PreQ1. It depends on Zn(2+) as a cofactor.

It catalyses the reaction 7-aminomethyl-7-carbaguanine + guanosine(34) in tRNA = 7-aminomethyl-7-carbaguanosine(34) in tRNA + guanine. It functions in the pathway tRNA modification; tRNA-queuosine biosynthesis. Functionally, catalyzes the base-exchange of a guanine (G) residue with the queuine precursor 7-aminomethyl-7-deazaguanine (PreQ1) at position 34 (anticodon wobble position) in tRNAs with GU(N) anticodons (tRNA-Asp, -Asn, -His and -Tyr). Catalysis occurs through a double-displacement mechanism. The nucleophile active site attacks the C1' of nucleotide 34 to detach the guanine base from the RNA, forming a covalent enzyme-RNA intermediate. The proton acceptor active site deprotonates the incoming PreQ1, allowing a nucleophilic attack on the C1' of the ribose to form the product. After dissociation, two additional enzymatic reactions on the tRNA convert PreQ1 to queuine (Q), resulting in the hypermodified nucleoside queuosine (7-(((4,5-cis-dihydroxy-2-cyclopenten-1-yl)amino)methyl)-7-deazaguanosine). The chain is Queuine tRNA-ribosyltransferase from Nitrosomonas europaea (strain ATCC 19718 / CIP 103999 / KCTC 2705 / NBRC 14298).